The primary structure comprises 125 residues: uncharacterized protein (125 aa).

The next 3 helical transmembrane spans lie at 20-42 (RNGG…LTIL), 57-76 (LMNA…GVVV), and 81-103 (YLFV…YMAS).

It localises to the cell membrane. This is an uncharacterized protein from Archaeoglobus fulgidus (strain ATCC 49558 / DSM 4304 / JCM 9628 / NBRC 100126 / VC-16).